The sequence spans 408 residues: E3 ubiquitin-protein ligase IE2 (408 aa).

Over residues 1-10 (MSRQINAATP) the composition is skewed to polar residues. Disordered regions lie at residues 1–67 (MSRQ…ENVQ) and 176–199 (QSPD…QSEP). Positions 13–25 (SRRHRLSLSRRRI) are enriched in basic residues. The span at 30–47 (SPEAQPSSSSRSQPSSSS) shows a compositional bias: low complexity. Tandem repeats lie at residues 34-41 (QPSSSSRS), 42-49 (QPSSSSRS), 51-54 (RRQE), and 55-58 (RRQE). The tract at residues 34-49 (QPSSSSRSQPSSSSRS) is 2 X 8 AA tandem repeats of Q-P-S-S-S-S-R-S. The tract at residues 51–58 (RRQERRQE) is 2 X 4 AA tandem repeats of R-R-Q-E. The segment covering 183 to 197 (SPQSPQPQQQQQQQS) has biased composition (low complexity). Residues 207 to 255 (CNICFTTFKDTKNVNSSFVTSIHCNHAVCFKCYVKIIMDNSVYKCFCSA) form an RING-type zinc finger.

It belongs to the alphabaculovirus IE2 protein family. In terms of assembly, homooligomer. Auto-ubiquitinated.

It localises to the host nucleus. It catalyses the reaction S-ubiquitinyl-[E2 ubiquitin-conjugating enzyme]-L-cysteine + [acceptor protein]-L-lysine = [E2 ubiquitin-conjugating enzyme]-L-cysteine + N(6)-ubiquitinyl-[acceptor protein]-L-lysine.. In terms of biological role, RING-finger E3 ubiquitin ligase that plays an important regulatory role during the initial stages of infection. Migrates to specific nuclear foci early in infection supposely to prepare the sites for viral transcription and replication by targeting and ubiquitinating host proteins. Acts as a transcriptional activator and activates a number of viral promoters including itself, IE1 and the promoter of 39K gene. The sequence is that of E3 ubiquitin-protein ligase IE2 (IE2) from Lepidoptera (butterflies and moths).